Reading from the N-terminus, the 111-residue chain is Large ribosomal subunit protein uL22 (111 aa).

Belongs to the universal ribosomal protein uL22 family. Part of the 50S ribosomal subunit.

Its function is as follows. This protein binds specifically to 23S rRNA; its binding is stimulated by other ribosomal proteins, e.g. L4, L17, and L20. It is important during the early stages of 50S assembly. It makes multiple contacts with different domains of the 23S rRNA in the assembled 50S subunit and ribosome. In terms of biological role, the globular domain of the protein is located near the polypeptide exit tunnel on the outside of the subunit, while an extended beta-hairpin is found that lines the wall of the exit tunnel in the center of the 70S ribosome. The sequence is that of Large ribosomal subunit protein uL22 from Chlamydia abortus (strain DSM 27085 / S26/3) (Chlamydophila abortus).